The chain runs to 218 residues: NAD(P)H-quinone oxidoreductase subunit I (218 aa).

2 consecutive 4Fe-4S ferredoxin-type domains span residues 55-84 (GRIHYEFDKCIACEVCVRVCPINLPVVDWV) and 95-124 (RNYSIDFGACIFCGNCVEYCPTNCLSMTEE). Residues Cys64, Cys67, Cys70, Cys74, Cys104, Cys107, Cys110, and Cys114 each contribute to the [4Fe-4S] cluster site. The segment at 179–218 (LRAGKLPSQIIKELQADKSEEEGKNNSSDMVPNKLNSTNK) is disordered. The span at 192-202 (LQADKSEEEGK) shows a compositional bias: basic and acidic residues. A compositionally biased stretch (polar residues) spans 203 to 218 (NNSSDMVPNKLNSTNK).

It belongs to the complex I 23 kDa subunit family. NDH-1 is composed of at least 11 different subunits. [4Fe-4S] cluster serves as cofactor.

The protein resides in the cellular thylakoid membrane. The catalysed reaction is a plastoquinone + NADH + (n+1) H(+)(in) = a plastoquinol + NAD(+) + n H(+)(out). It catalyses the reaction a plastoquinone + NADPH + (n+1) H(+)(in) = a plastoquinol + NADP(+) + n H(+)(out). NDH-1 shuttles electrons from an unknown electron donor, via FMN and iron-sulfur (Fe-S) centers, to quinones in the respiratory and/or the photosynthetic chain. The immediate electron acceptor for the enzyme in this species is believed to be plastoquinone. Couples the redox reaction to proton translocation, and thus conserves the redox energy in a proton gradient. The chain is NAD(P)H-quinone oxidoreductase subunit I from Prochlorococcus marinus (strain NATL2A).